The chain runs to 212 residues: Adenylate kinase (212 aa).

10–15 (GAGKGT) contributes to the ATP binding site. The segment at 30–59 (AIGDIFRTIIKTSTSEAELINNYVRQGELI) is NMP. Residues arginine 36, 57–59 (ELI), 85–88 (GYPR), and glutamine 92 contribute to the AMP site. Residues 122 to 160 (GRYSCKNCGKIYNRYFLQPKTDNVCDVCGSSTFDYRKDD) form an LID region. Arginine 123 provides a ligand contact to ATP. Positions 126 and 129 each coordinate Zn(2+). Position 132–133 (132–133 (IY)) interacts with ATP. Residues cysteine 146 and cysteine 149 each coordinate Zn(2+). 2 residues coordinate AMP: arginine 157 and arginine 168. Residue lysine 196 participates in ATP binding.

The protein belongs to the adenylate kinase family. Monomer.

Its subcellular location is the cytoplasm. It catalyses the reaction AMP + ATP = 2 ADP. Its pathway is purine metabolism; AMP biosynthesis via salvage pathway; AMP from ADP: step 1/1. Functionally, catalyzes the reversible transfer of the terminal phosphate group between ATP and AMP. Plays an important role in cellular energy homeostasis and in adenine nucleotide metabolism. This is Adenylate kinase from Rickettsia rickettsii (strain Iowa).